An 819-amino-acid chain; its full sequence is Protein EFR3 homolog A (819 aa).

Residues S360, S363, S420, and S692 each carry the phosphoserine modification.

This sequence belongs to the EFR3 family. Component of a phosphatidylinositol 4-kinase (PI4K) complex, composed of PI4KA, EFR3 (EFR3A or EFR3B), TTC7 (TTC7A or TTC7B) and HYCC (HYCC1 or HYCC2). In terms of processing, palmitoylated at its N-terminus, anchoring the protein to the plasma membrane. In terms of tissue distribution, widely expressed. Expressed in neurons of the superior olivary complex of the auditory brainstem. Also expressed at lower levels in the cochlear nucleus, the lateral leminiscal nuclei and the inferior collicus.

The protein resides in the cell membrane. It localises to the cytoplasm. It is found in the cytosol. Functionally, component of a complex required to localize phosphatidylinositol 4-kinase (PI4K) to the plasma membrane. The complex acts as a regulator of phosphatidylinositol 4-phosphate (PtdIns(4)P) synthesis. In the complex, EFR3A probably acts as the membrane-anchoring component. Also involved in responsiveness to G-protein-coupled receptors; it is however unclear whether this role is direct or indirect. The sequence is that of Protein EFR3 homolog A from Mus musculus (Mouse).